Here is a 214-residue protein sequence, read N- to C-terminus: Adenylate kinase (214 aa).

Residue 10 to 15 (GAGKGT) participates in ATP binding. Residues 30–59 (STGDMFREEISAKSELGRKVEDILKRGELV) form an NMP region. Residues threonine 31, arginine 36, 57–59 (ELV), 85–88 (GYPR), and glutamine 92 contribute to the AMP site. Residues 126–163 (NRRICKNCGKIYNLITLPPKINGKCDVCGGELYQREDD) form an LID region. Arginine 127 contacts ATP. Zn(2+)-binding residues include cysteine 130 and cysteine 133. 136-137 (IY) provides a ligand contact to ATP. Zn(2+) is bound by residues cysteine 150 and cysteine 153. The AMP site is built by arginine 160 and arginine 171. Methionine 199 contributes to the ATP binding site.

The protein belongs to the adenylate kinase family. Monomer.

Its subcellular location is the cytoplasm. It catalyses the reaction AMP + ATP = 2 ADP. It participates in purine metabolism; AMP biosynthesis via salvage pathway; AMP from ADP: step 1/1. Its function is as follows. Catalyzes the reversible transfer of the terminal phosphate group between ATP and AMP. Plays an important role in cellular energy homeostasis and in adenine nucleotide metabolism. The protein is Adenylate kinase of Thermosipho melanesiensis (strain DSM 12029 / CIP 104789 / BI429).